A 1004-amino-acid polypeptide reads, in one-letter code: Phyllocladan-16-alpha-ol synthase (1004 aa).

Residues 321-324 carry the DXDD motif motif; it reads DADD. 6 residues coordinate Mg(2+): aspartate 667, glutamate 671, asparagine 872, aspartate 873, serine 876, and aspartate 880. The DEXXE motif motif lies at 667-671; that stretch reads DEFME.

This sequence belongs to the terpene synthase family. Requires Mg(2+) as cofactor.

It catalyses the reaction (2E,6E,10E)-geranylgeranyl diphosphate = (+)-copalyl diphosphate. The enzyme catalyses (+)-copalyl diphosphate + H2O = phyllocladan-16alpha-ol + diphosphate. Its function is as follows. Involved in the synthesis of labdane-related hydrocarbons by catalyzing the conversion of geranylgeranyl diphosphate (GGDP) to phyllocladan-16-alpha-ol in a two step via type B cyclization into a (+)-copalyl diphosphate ((+)-CDP) intermediate. The polypeptide is Phyllocladan-16-alpha-ol synthase (PaDC1) (Phomopsis amygdali (Fusicoccum amygdali)).